Reading from the N-terminus, the 391-residue chain is ATP phosphoribosyltransferase regulatory subunit (391 aa).

This sequence belongs to the class-II aminoacyl-tRNA synthetase family. HisZ subfamily. Heteromultimer composed of HisG and HisZ subunits.

Its subcellular location is the cytoplasm. It functions in the pathway amino-acid biosynthesis; L-histidine biosynthesis; L-histidine from 5-phospho-alpha-D-ribose 1-diphosphate: step 1/9. Required for the first step of histidine biosynthesis. May allow the feedback regulation of ATP phosphoribosyltransferase activity by histidine. The polypeptide is ATP phosphoribosyltransferase regulatory subunit (Nitrosomonas europaea (strain ATCC 19718 / CIP 103999 / KCTC 2705 / NBRC 14298)).